The following is a 117-amino-acid chain: Large ribosomal subunit protein uL24 (117 aa).

This sequence belongs to the universal ribosomal protein uL24 family. As to quaternary structure, part of the 50S ribosomal subunit.

In terms of biological role, one of two assembly initiator proteins, it binds directly to the 5'-end of the 23S rRNA, where it nucleates assembly of the 50S subunit. Its function is as follows. One of the proteins that surrounds the polypeptide exit tunnel on the outside of the subunit. The polypeptide is Large ribosomal subunit protein uL24 (Trichormus variabilis (strain ATCC 29413 / PCC 7937) (Anabaena variabilis)).